The primary structure comprises 202 residues: Putative 3-methyladenine DNA glycosylase (202 aa).

Belongs to the DNA glycosylase MPG family.

The chain is Putative 3-methyladenine DNA glycosylase from Clostridium botulinum (strain Alaska E43 / Type E3).